Reading from the N-terminus, the 338-residue chain is Ribosomal RNA large subunit methyltransferase F (338 aa).

The interval 1–21 is disordered; the sequence is MTQKKNKPTQKKKGLHPRNPH.

This sequence belongs to the methyltransferase superfamily. METTL16/RlmF family.

The protein localises to the cytoplasm. The catalysed reaction is adenosine(1618) in 23S rRNA + S-adenosyl-L-methionine = N(6)-methyladenosine(1618) in 23S rRNA + S-adenosyl-L-homocysteine + H(+). Its function is as follows. Specifically methylates the adenine in position 1618 of 23S rRNA. The protein is Ribosomal RNA large subunit methyltransferase F of Photobacterium profundum (strain SS9).